Reading from the N-terminus, the 496-residue chain is Polyamine oxidase 6 (496 aa).

Residues 1 to 27 (MTKPTTMAIFLVLALSIAQLLPSLVAG) form the signal peptide. FAD is bound by residues E61 and R69. N-linked (GlcNAc...) asparagine glycosylation is found at N103 and N150. Residue V261 coordinates FAD. An N-linked (GlcNAc...) asparagine glycan is attached at N278. E454 contributes to the FAD binding site.

Belongs to the flavin monoamine oxidase family. FAD is required as a cofactor.

The protein localises to the secreted. Its subcellular location is the extracellular space. The protein resides in the apoplast. It participates in amine and polyamine degradation; spermine degradation. Its function is as follows. Flavoenzyme involved in polyamine back-conversion. Catalyzes the oxidation of the secondary amino group of polyamines, such as spermine and spermidine. The chain is Polyamine oxidase 6 from Oryza sativa subsp. japonica (Rice).